A 456-amino-acid polypeptide reads, in one-letter code: Glutamyl-tRNA reductase (456 aa).

Substrate is bound by residues 49 to 52 (TCNR), S109, 114 to 116 (EQQ), and Q120. C50 acts as the Nucleophile in catalysis. NADP(+) is bound at residue 189–194 (GAGSMG).

Belongs to the glutamyl-tRNA reductase family. Homodimer.

The catalysed reaction is (S)-4-amino-5-oxopentanoate + tRNA(Glu) + NADP(+) = L-glutamyl-tRNA(Glu) + NADPH + H(+). It participates in porphyrin-containing compound metabolism; protoporphyrin-IX biosynthesis; 5-aminolevulinate from L-glutamyl-tRNA(Glu): step 1/2. Catalyzes the NADPH-dependent reduction of glutamyl-tRNA(Glu) to glutamate 1-semialdehyde (GSA). This Mycolicibacterium vanbaalenii (strain DSM 7251 / JCM 13017 / BCRC 16820 / KCTC 9966 / NRRL B-24157 / PYR-1) (Mycobacterium vanbaalenii) protein is Glutamyl-tRNA reductase.